Here is a 351-residue protein sequence, read N- to C-terminus: Basic salivary proline-rich protein 3 (351 aa).

Positions 1-16 (MLLILLSVALLALSSA) are cleaved as a signal peptide. Residue Gln-17 is modified to Pyrrolidone carboxylic acid. The segment at 17-351 (QSLNEDVSQE…HRPPQGQPPQ (335 aa)) is disordered. Polar residues predominate over residues 20–31 (NEDVSQEESPSV). Ser-24 carries the post-translational modification Phosphoserine. 12 consecutive repeat copies span residues 53–73 (PPGK…GPPP), 74–94 (RPGK…GPPP), 95–115 (RPGK…GPPP), 116–136 (RPGK…GPPP), 137–157 (RPGK…GPPP), 158–178 (RPGK…GPPP), 179–199 (HPGK…GPPP), 200–220 (RPGK…GPPP), 221–241 (RPGK…GPPP), 242–261 (RPGK…QGPP), 263–283 (RPGK…GPPP), and 284–304 (HPGK…RPPP). A 12 X 21 AA tandem repeats of [RHP]-P-G-K-P-[EQ]-G-[PQS]-P-[PS]-Q-[GE]-G-N-[QK]-[SP]-[QR]-[GR]-P-P-P region spans residues 53-304 (PPGKPEGRPP…EGNKPQRPPP (252 aa)). N-linked (GlcNAc...) asparagine glycosylation occurs at Asn-66. The span at 70–84 (GPPPRPGKPEGPPPQ) shows a compositional bias: pro residues. Asn-87 carries N-linked (GlcNAc...) asparagine glycosylation. O-linked (Hex) serine glycosylation occurs at Ser-89. Residues 99-111 (PEGQPPQGGNQSQ) are compositionally biased toward low complexity. N-linked (GlcNAc...) asparagine glycosylation is present at Asn-108. A compositionally biased stretch (pro residues) spans 112–126 (GPPPRPGKPEGPPPQ). N-linked (GlcNAc...) asparagine glycosylation occurs at Asn-129. Over residues 133-147 (GPPPRPGKPEGPPPQ) the composition is skewed to pro residues. Asn-150 carries N-linked (GlcNAc...) asparagine glycosylation. 2 stretches are compositionally biased toward pro residues: residues 154 to 168 (GPPP…PPPQ) and 175 to 189 (GPPP…PPPQ). N-linked (GlcNAc...) asparagine glycosylation is present at Asn-192. The segment covering 196–210 (GPPPRPGKPEGPPPQ) has biased composition (pro residues). Asn-213 and Asn-234 each carry an N-linked (GlcNAc...) asparagine glycan. 3 stretches are compositionally biased toward pro residues: residues 217-252 (GPPP…PPPQ), 259-270 (GPPPRPGKPEGP), and 279-351 (QGPP…QPPQ). Asn-297 carries N-linked (Hex) asparagine; atypical glycosylation.

N- and O-glycosylated; contains about 50% carbohydrate. This is composed of highly fucosylated N-linked saccharides, the major structure is a biantennary asialosaccharide containing 2 fucose residues on one antenna and an unsubstituted terminal lactosamine sequence on the other. The Gram-negative bacterium F.nucleatum binds to carbohydrates containing unsubstituted GalBeta1,4GlcNAc residues. N-glycosylation on Asn-87 is prevalent in head and neck cancer patients. In terms of processing, proteolytically cleaved at the tripeptide Xaa-Pro-Gln, where Xaa in the P(3) position is mostly lysine. The endoprotease may be of microbial origin. Besides on the N-terminal of mature PRB3, pyroglutamate formation found on at least Gln-67, Gln-88, Gln-256 and Gln-337.

The protein resides in the secreted. Functionally, acts as a receptor for the Gram-negative bacterium F.nucleatum. This chain is Basic salivary proline-rich protein 3 (PRB3), found in Homo sapiens (Human).